Consider the following 94-residue polypeptide: Acylphosphatase (94 aa).

In terms of domain architecture, Acylphosphatase-like spans 8-94 (HIRAWVSGKV…ETPPLGFEVC (87 aa)). Active-site residues include R23 and N41.

Belongs to the acylphosphatase family.

It catalyses the reaction an acyl phosphate + H2O = a carboxylate + phosphate + H(+). This Hahella chejuensis (strain KCTC 2396) protein is Acylphosphatase (acyP).